Consider the following 837-residue polypeptide: Vacuolar membrane protease (837 aa).

Residues 1-36 (MSEEEVHDTSSEASEVFTNQPNAFVRGVRSIFGYRK) are Cytoplasmic-facing. A helical transmembrane segment spans residues 37–57 (TSLTLFVILTIVVTAGLSFYD). Over 58-355 (NSLELTIELP…FATPISALAR (298 aa)) the chain is Vacuolar. N143 is a glycosylation site (N-linked (GlcNAc...) asparagine). 2 residues coordinate Zn(2+): H157 and D169. The Proton acceptor role is filled by E201. 3 residues coordinate Zn(2+): E202, E227, and H299. A helical membrane pass occupies residues 356–376 (VNLVLLVLFPVVSTPLLFVIV). The Cytoplasmic segment spans residues 377–384 (KYKKWKLR). Residues 385 to 405 (VTNFLGVPLAMGLAVAVGQVG) form a helical membrane-spanning segment. The Vacuolar segment spans residues 406–415 (NPMLVSSHPM). A helical membrane pass occupies residues 416–436 (MVVATTTSIVVLVYYVVLNGV). At 437–446 (DWVNTSSDQK) the chain is on the cytoplasmic side. A helical transmembrane segment spans residues 447-467 (LVTMIEVSFVYWVVLVYVTWS). The Vacuolar portion of the chain corresponds to 468 to 474 (GGDHTGE). Residues 475–495 (FGVTVLFFVQASTSLLGLIGW) form a helical membrane-spanning segment. At 496-539 (TFTRVRGGDEPLLSGEEERYGTEDERDTEKPLVEHNYDWSLQYL) the chain is on the cytoplasmic side. Residues 540 to 560 (LIVPVSSLVVYNSGWLVLEGV) form a helical membrane-spanning segment. N-linked (GlcNAc...) asparagine glycosylation is present at N561. Residues 561–572 (NKTVQESLASEH) lie on the Vacuolar side of the membrane. Residues 573-593 (LIYWIVVVFSQFLVLPVVPFI) traverse the membrane as a helical segment. Topologically, residues 594 to 598 (TKFNR) are cytoplasmic. Residues 599–619 (YIVLGLSVVAVVGVLMSMAVH) traverse the membrane as a helical segment. Topologically, residues 620-837 (PFNQGSPMKL…LVGVVKHVDV (218 aa)) are vacuolar. N689 carries an N-linked (GlcNAc...) asparagine glycan.

This sequence belongs to the peptidase M28 family. It depends on Zn(2+) as a cofactor.

It localises to the vacuole membrane. Functionally, may be involved in vacuolar sorting and osmoregulation. The polypeptide is Vacuolar membrane protease (Candida albicans (strain WO-1) (Yeast)).